Reading from the N-terminus, the 357-residue chain is Transactivator protein DR7 (357 aa).

An interaction with host p53 region spans residues 107-187 (LVGKDGAVYV…LLTVGGLCQT (81 aa)).

Belongs to the herpesviridae US22 family. Interacts with host p53 and inhibits p53-activated transcription.

Involved in transactivation. Displays transforming activity. The polypeptide is Transactivator protein DR7 (DR7L) (Homo sapiens (Human)).